Consider the following 551-residue polypeptide: Cleavage and polyadenylation specificity factor subunit 6 (551 aa).

The segment at 1–213 is necessary for interaction with NXF1; it reads MADGVDHIDI…RGRFPGAVPG (213 aa). One can recognise an RRM domain in the interval 81 to 161; it reads IALYIGNLTW…QSPVVTPCNK (81 aa). Residues 81–161 form a necessary for interaction with NUDT21/CPSF5 region; the sequence is IALYIGNLTW…QSPVVTPCNK (81 aa). A necessary for nuclear paraspeckles localization region spans residues 81 to 161; it reads IALYIGNLTW…QSPVVTPCNK (81 aa). Thr157 is subject to Phosphothreonine. A compositionally biased stretch (polar residues) spans 169 to 180; the sequence is MQSRKTTQSGQM. Disordered regions lie at residues 169 to 411 and 477 to 551; these read MQSR…PLSE and LHGI…YRHR. Gly residues predominate over residues 184-193; it reads GKAGPPGGGS. Positions 202–206 match the GAR motif; the sequence is RGRGR. A compositionally biased stretch (low complexity) spans 207-219; sequence FPGAVPGGDRFPG. Composition is skewed to pro residues over residues 220–265, 285–366, and 377–388; these read PAGP…PLAG, GQPP…PPPT, and GPPPTDPYGRPP. A compositionally biased stretch (basic and acidic residues) spans 389 to 404; that stretch reads PYDRGDYGPPGREMDT. Residues Thr404 and Thr407 each carry the phosphothreonine modification. The tract at residues 404-551 is sufficient for nuclear speckle localization; the sequence is TARTPLSEAE…RDREREYRHR (148 aa). A necessary for RNA-binding region spans residues 405–551; that stretch reads ARTPLSEAEF…RDREREYRHR (147 aa). A necessary for interaction with SRSF3, SRSF7 and TRA2B/SFRS10 region spans residues 481 to 551; sequence ESKSYGSGSR…RDREREYRHR (71 aa). Basic and acidic residues predominate over residues 489-503; it reads SRRERSRERDHSRSR. The interval 490-551 is arg/Ser-rich domain; the sequence is RRERSRERDH…RDREREYRHR (62 aa). 5 positions are modified to phosphoserine: Ser494, Ser500, Ser511, Ser513, and Ser525. Basic residues predominate over residues 504-514; it reads EKSRRHKSRSR. The segment at 510–551 is sufficient for nuclear targeting; that stretch reads KSRSRDRHDDYYRERSRERERHRDRDRDRDRERDREREYRHR. Residues 515 to 551 are compositionally biased toward basic and acidic residues; that stretch reads DRHDDYYRERSRERERHRDRDRDRDRERDREREYRHR.

It belongs to the RRM CPSF6/7 family. Component of the cleavage factor Im (CFIm) complex which is a heterotetramer composed of two subunits of NUDT21/CPSF5 and two subunits of CPSF6 or CPSF7 or a heterodimer of CPSF6 and CPSF7. The cleavage factor Im (CFIm) complex associates with the CPSF and CSTF complexes to promote the assembly of the core mRNA 3'-processing machinery. Associates with the exon junction complex (EJC). Associates with the 80S ribosome particle. Interacts (via the RRM domain) with NUDT21/CPSF5; this interaction is direct and enhances binding to RNA. Interacts (via Arg/Ser-rich domain) with FIP1L1 (preferentially via unphosphorylated form and Arg/Glu/Asp-rich domain); this interaction mediates, at least in part, the interaction between the CFIm and CPSF complexes and may be inhibited by CPSF6 hyper-phosphorylation. Interacts (via N-terminus) with NXF1; this interaction is direct. Interacts with SRSF3. Interacts with SRSF7. Interacts with SNRNP70. Interacts with TRA2B/SFRS10. Interacts with UPF1. Interacts with UPF3B. Interacts with VIRMA. Interacts (via Arg/Ser-rich domain) with TNPO3; promoting nuclear import of CPSF6 independently of its phosphorylation status. Interacts with YTHDC1. In terms of processing, phosphorylated. Phosphorylated in the Arg/Ser-rich domain by SRPK1, in vitro. Symmetrically dimethylated on arginine residues by PRMT5 in a WDR77- and CLNS1A-dependent manner. Asymmetrically dimethylated on arginine residues by PRMT1. Post-translationally, symmetrically dimethylated on arginine residues in the GAR motif by PRMT5 in a WDR77- and CLNS1A-dependent manner. Asymmetrically dimethylated on arginine residues in the GAR motif by PRMT1. As to expression, expressed in testis. Expressed in male germ cells (at protein level).

The protein localises to the nucleus. Its subcellular location is the nucleoplasm. The protein resides in the nucleus speckle. It localises to the cytoplasm. Functionally, component of the cleavage factor Im (CFIm) complex that functions as an activator of the pre-mRNA 3'-end cleavage and polyadenylation processing required for the maturation of pre-mRNA into functional mRNAs. CFIm contributes to the recruitment of multiprotein complexes on specific sequences on the pre-mRNA 3'-end, so called cleavage and polyadenylation signals (pA signals). Most pre-mRNAs contain multiple pA signals, resulting in alternative cleavage and polyadenylation (APA) producing mRNAs with variable 3'-end formation. The CFIm complex acts as a key regulator of cleavage and polyadenylation site choice during APA through its binding to 5'-UGUA-3' elements localized in the 3'-untranslated region (UTR) for a huge number of pre-mRNAs. CPSF6 enhances NUDT21/CPSF5 binding to 5'-UGUA-3' elements localized upstream of pA signals and promotes RNA looping, and hence activates directly the mRNA 3'-processing machinery. Plays a role in mRNA export. The protein is Cleavage and polyadenylation specificity factor subunit 6 of Mus musculus (Mouse).